A 445-amino-acid polypeptide reads, in one-letter code: Membrane protein insertase YidC (445 aa).

The next 5 helical transmembrane spans lie at 6 to 26 (VVAI…PIKV), 248 to 268 (FGWA…PLYH), 313 to 333 (ASGC…WSVI), 352 to 372 (LSAG…VASY), and 388 to 408 (GIIM…GLFL).

Belongs to the OXA1/ALB3/YidC family. Type 1 subfamily. Interacts with the Sec translocase complex via SecD. Specifically interacts with transmembrane segments of nascent integral membrane proteins during membrane integration.

The protein resides in the cell inner membrane. Required for the insertion and/or proper folding and/or complex formation of integral membrane proteins into the membrane. Involved in integration of membrane proteins that insert both dependently and independently of the Sec translocase complex, as well as at least some lipoproteins. Aids folding of multispanning membrane proteins. The polypeptide is Membrane protein insertase YidC (Thermotoga maritima (strain ATCC 43589 / DSM 3109 / JCM 10099 / NBRC 100826 / MSB8)).